The chain runs to 355 residues: Protein ATP1B4 (355 aa).

The Nuclear segment spans residues 1 to 108; the sequence is MRRQLRSRRA…SLARTGQSWS (108 aa). The interval 33–77 is disordered; it reads ADEEEEAEEEARVMVVPDLEEEEEEEEEKEEEEKEEEDSHSQETD. Residues 50-68 show a composition bias toward acidic residues; it reads DLEEEEEEEEEKEEEEKEE. The chain crosses the membrane as a helical; Signal-anchor for type II membrane protein span at residues 109 to 129; it reads LILVIYFFFYASLAAVITLCM. The Perinuclear space segment spans residues 130-355; the sequence is YTLFLTISPY…RVIFTLNIET (226 aa).

This sequence belongs to the X(+)/potassium ATPases subunit beta family. As to quaternary structure, associates with a SMAD7-transcriptional complex. Interacts with SNW1 and TOR1AIP1. Does not associate with known Na,K-ATPase alpha-subunits.

The protein resides in the nucleus inner membrane. In terms of biological role, may act as a transcriptional coregulator during muscle development through its interaction with SNW1. Has lost its ancestral function as a Na,K-ATPase beta-subunit. In Bos taurus (Bovine), this protein is Protein ATP1B4 (ATP1B4).